The sequence spans 387 residues: TSC22 domain family protein 4 (387 aa).

Disordered stretches follow at residues 1–85 and 135–232; these read MSGG…GEPY and ISTP…RRDG. A compositionally biased stretch (pro residues) spans 28 to 51; the sequence is SDPPAPPAPAGPPPRLPNGEPNPD. A Phosphothreonine modification is found at Thr-57. Phosphoserine is present on residues Ser-62 and Ser-165. Thr-183 carries the post-translational modification Phosphothreonine. Phosphoserine occurs at positions 187 and 189. A Phosphothreonine modification is found at Thr-223. 3 positions are modified to phosphoserine: Ser-254, Ser-258, and Ser-271. Positions 336–357 are leucine-zipper; it reads LKEQIRDLAERNAALEQENGLL. Ser-362 bears the Phosphoserine mark. Residues 368 to 387 form a disordered region; it reads QLPSSGLPRLGPSAPNGPSI.

This sequence belongs to the TSC-22/Dip/Bun family. In terms of assembly, forms a homodimer or heterodimer. Forms a heterodimer with TSC22D1 isoforms 1 and 2. Interacts with NRBP1.

It is found in the nucleus. It localises to the cytoplasm. The protein localises to the cell projection. Its subcellular location is the dendrite. The protein resides in the synapse. Binds DNA and acts as a transcriptional repressor. Involved in the regulation of systematic glucose homeostasis and insulin sensitivity, via transcriptional repression of downstream insulin signaling targets such as OBP2A/LCN13. Acts as a negative regulator of lipogenic gene expression in hepatocytes and thereby mediates the control of very low-density lipoprotein release. May play a role in neurite elongation and survival. The polypeptide is TSC22 domain family protein 4 (Rattus norvegicus (Rat)).